The following is a 93-amino-acid chain: MMKTAVMFILVVVISLTYSSEEQEVARTYCGRHLANILAYVCFGVEKRGGAQYAPYWQETYLRSRKGPGVVDECCFRPCKLEVLKSFFFFFCD.

The signal sequence occupies residues 1–22; that stretch reads MMKTAVMFILVVVISLTYSSEE. 3 disulfide bridges follow: cysteine 30–cysteine 75, cysteine 42–cysteine 92, and cysteine 74–cysteine 79. Residues 49 to 64 constitute a propeptide, bombyxin B-11 C peptide; it reads GGAQYAPYWQETYLRS.

Belongs to the insulin family. Heterodimer of a B chain and an A chain linked by two disulfide bonds.

The protein resides in the secreted. Its function is as follows. Brain peptide responsible for activation of prothoracic glands to produce ecdysone in insects. The sequence is that of Bombyxin B-11 (BBXB11) from Bombyx mori (Silk moth).